The primary structure comprises 1272 residues: Magnesium-chelatase subunit H (1272 aa).

The protein belongs to the Mg-chelatase subunit H family.

The enzyme catalyses protoporphyrin IX + Mg(2+) + ATP + H2O = Mg-protoporphyrin IX + ADP + phosphate + 3 H(+). Its pathway is porphyrin-containing compound metabolism; bacteriochlorophyll biosynthesis (light-independent). Functionally, involved in bacteriochlorophyll pigment biosynthesis; introduces a magnesium ion into protoporphyrin IX to yield Mg-protoroporphyrin IX. In Chlorobaculum parvum (strain DSM 263 / NCIMB 8327) (Chlorobium vibrioforme subsp. thiosulfatophilum), this protein is Magnesium-chelatase subunit H (bchH).